Here is a 356-residue protein sequence, read N- to C-terminus: sn-glycerol-3-phosphate import ATP-binding protein UgpC (356 aa).

The ABC transporter domain maps to 4–235 (LKLQAVTKSW…PASRFVASFI (232 aa)). Residue 37-44 (GPSGCGKS) participates in ATP binding.

It belongs to the ABC transporter superfamily. sn-glycerol-3-phosphate importer (TC 3.A.1.1.3) family. As to quaternary structure, the complex is composed of two ATP-binding proteins (UgpC), two transmembrane proteins (UgpA and UgpE) and a solute-binding protein (UgpB).

The protein resides in the cell inner membrane. It catalyses the reaction sn-glycerol 3-phosphate(out) + ATP + H2O = sn-glycerol 3-phosphate(in) + ADP + phosphate + H(+). In terms of biological role, part of the ABC transporter complex UgpBAEC involved in sn-glycerol-3-phosphate (G3P) import. Responsible for energy coupling to the transport system. The chain is sn-glycerol-3-phosphate import ATP-binding protein UgpC from Salmonella choleraesuis (strain SC-B67).